We begin with the raw amino-acid sequence, 561 residues long: MNINVAELLNGNYILLLFVVLALGLCLGKLRLGSIQLGNSIGVLVVSLLLGQQHFSINTEALNLGFMLFIFCVGVEAGPNFFSIFFRDGKNYLMLALVMVGSALLIALGLGKLFGWDIGLTAGMLAGSMTSTPVLVGAGDTLRHFGISGTELSSALDNLSLGYALTYLIGLVSLIVGARYLPKLQHQDLQTSAQQIARERGLDTDATRKVYLPVIRAYRVGPELVAWTDGKNLRELGIYRQTGCYIERIRRNGILANPDGDAVLQMGDEIALVGYPDAHARLDPSFRNGKEVFDRDLLDMRIVTEEVVVKNHNAVGKRLAQLKLTDHGCFLNRVIRSQIEMPIDDNVVLNKGDVLQVSGDARRVKTIADRIGFISIHSQVTDLLAFCAFFIIGLMIGMITFQFSSFSFGMGNAAGLLFAGIMLGFMRANHPTFGYIPQGALSMVKEFGLMVFMAGVGLSAGSGINNGLGAIGGQMLVAGLIVSLVPVVICFLFGAYVLRMNRALLFGAMMGARTCAPAMEIISDTARSNIPALGYAGTYAIANVLLTLAGTIIVMVWPGLG.

5 consecutive transmembrane segments (helical) span residues 8 to 28 (LLNG…LCLG), 32 to 52 (LGSI…LLGQ), 66 to 86 (FMLF…SIFF), 94 to 114 (MLAL…GKLF), and 158 to 178 (NLSL…IVGA). 2 consecutive RCK C-terminal domains span residues 202 to 288 (LDTD…SFRN) and 292 to 373 (VFDR…RIGF). 5 consecutive transmembrane segments (helical) span residues 383–403 (LLAF…TFQF), 406–426 (FSFG…LGFM), 451–471 (VFMA…LGAI), 475–495 (MLVA…LFGA), and 540–560 (AIAN…WPGL).

Belongs to the AAE transporter (TC 2.A.81) family. YbjL subfamily.

It is found in the cell membrane. This is Putative transport protein YbjL from Escherichia fergusonii (strain ATCC 35469 / DSM 13698 / CCUG 18766 / IAM 14443 / JCM 21226 / LMG 7866 / NBRC 102419 / NCTC 12128 / CDC 0568-73).